The following is a 136-amino-acid chain: Glutamyl-tRNA(Gln) amidotransferase subunit C, mitochondrial (136 aa).

This sequence belongs to the GatC family. Subunit of the heterotrimeric GatCAB amidotransferase (AdT) complex, composed of A (QRSL1), B (GATB) and C (GATC) subunits.

Its subcellular location is the mitochondrion. It carries out the reaction L-glutamyl-tRNA(Gln) + L-glutamine + ATP + H2O = L-glutaminyl-tRNA(Gln) + L-glutamate + ADP + phosphate + H(+). Allows the formation of correctly charged Gln-tRNA(Gln) through the transamidation of misacylated Glu-tRNA(Gln) in the mitochondria. The reaction takes place in the presence of glutamine and ATP through an activated gamma-phospho-Glu-tRNA(Gln). This Homo sapiens (Human) protein is Glutamyl-tRNA(Gln) amidotransferase subunit C, mitochondrial.